A 380-amino-acid polypeptide reads, in one-letter code: Cytochrome b (380 aa).

4 helical membrane passes run 34–54, 78–99, 114–134, and 179–199; these read FGSL…LLAT, WLIR…YLHI, WNTG…GYVL, and FFAL…IHLT. Heme b contacts are provided by His-84 and His-98. His-183 and His-197 together coordinate heme b. His-202 contributes to the a ubiquinone binding site. 4 helical membrane-spanning segments follow: residues 227–247, 289–309, 321–341, and 348–368; these read LKDI…ALFS, LGGV…PLLH, FSQF…WVGS, and FIII…LLFP.

The protein belongs to the cytochrome b family. In terms of assembly, the cytochrome bc1 complex contains 11 subunits: 3 respiratory subunits (MT-CYB, CYC1 and UQCRFS1), 2 core proteins (UQCRC1 and UQCRC2) and 6 low-molecular weight proteins (UQCRH/QCR6, UQCRB/QCR7, UQCRQ/QCR8, UQCR10/QCR9, UQCR11/QCR10 and a cleavage product of UQCRFS1). This cytochrome bc1 complex then forms a dimer. Heme b serves as cofactor.

The protein localises to the mitochondrion inner membrane. Functionally, component of the ubiquinol-cytochrome c reductase complex (complex III or cytochrome b-c1 complex) that is part of the mitochondrial respiratory chain. The b-c1 complex mediates electron transfer from ubiquinol to cytochrome c. Contributes to the generation of a proton gradient across the mitochondrial membrane that is then used for ATP synthesis. The protein is Cytochrome b (MT-CYB) of Alca torda (Razorbill).